Here is a 100-residue protein sequence, read N- to C-terminus: ESAT-6-like protein EsxT (100 aa).

It belongs to the WXG100 family. ESAT-6 subfamily. As to quaternary structure, forms a tight 1:1 complex with EsxU.

The protein localises to the secreted. This is ESAT-6-like protein EsxT from Mycobacterium tuberculosis (strain CDC 1551 / Oshkosh).